The primary structure comprises 475 residues: Pyruvate kinase (475 aa).

Arg36 is a binding site for substrate. Asn38, Ser40, and Asp70 together coordinate K(+). Residue 38-41 (NFSH) participates in ATP binding. Residues Arg77 and Lys158 each coordinate ATP. A Mg(2+)-binding site is contributed by Glu223. Substrate contacts are provided by Gly246, Asp247, and Thr279. Asp247 is a binding site for Mg(2+).

This sequence belongs to the pyruvate kinase family. In terms of assembly, homotetramer. It depends on a divalent metal cation as a cofactor.

It catalyses the reaction pyruvate + ATP = phosphoenolpyruvate + ADP + H(+). Its pathway is carbohydrate degradation; glycolysis; pyruvate from D-glyceraldehyde 3-phosphate: step 5/5. The polypeptide is Pyruvate kinase (pki) (Thermococcus litoralis (strain ATCC 51850 / DSM 5473 / JCM 8560 / NS-C)).